The following is a 55-amino-acid chain: Major pollen allergen Dac g 4 (55 aa).

This chain is Major pollen allergen Dac g 4, found in Dactylis glomerata (Orchard grass).